Here is a 744-residue protein sequence, read N- to C-terminus: Prestin (744 aa).

The Cytoplasmic portion of the chain corresponds to M1–K75. Residues F76–L104 form a helical membrane-spanning segment. At A105–P108 the chain is on the extracellular side. The chain crosses the membrane as a helical span at residues P109 to F126. The Cytoplasmic segment spans residues G127–F137. Residues A138 to V149 form a helical membrane-spanning segment. Topologically, residues R150–T168 are extracellular. The Involved in motor function motif lies at I158 to T168. Residues N163 and N166 are each glycosylated (N-linked (GlcNAc...) asparagine). Residues E169 to C196 form a helical membrane-spanning segment. Residues R197–T206 are Cytoplasmic-facing. Residues E207–F230 traverse the membrane as a helical segment. Over G231–F241 the chain is Extracellular. The helical intramembrane region spans S242–N253. The Extracellular portion of the chain corresponds to V254–N258. Residues V259–K276 form a helical membrane-spanning segment. Over E277–P291 the chain is Cytoplasmic. Residues L292–F307 traverse the membrane as a helical segment. Topologically, residues N308–D332 are extracellular. A helical membrane pass occupies residues T333 to K359. Over T360–D370 the chain is Cytoplasmic. A helical transmembrane segment spans residues G371 to F388. Over Q389 to S396 the chain is Extracellular. The helical transmembrane segment at L397–T406 threads the bilayer. S398 serves as a coordination point for salicylate. Residues G407–T410 are Cytoplasmic-facing. The chain crosses the membrane as a helical span at residues Q411–L431. Residues F432 to P436 are Extracellular-facing. The chain crosses the membrane as a helical span at residues Q437 to T464. A topological domain (cytoplasmic) is located at residue S465. A helical membrane pass occupies residues K466–F481. Residues L482–L484 lie on the Extracellular side of the membrane. The chain crosses the membrane as a helical span at residues D485–Q504. An extended region for STAS domain region spans residues S505–A718. Residues S505–A744 are Cytoplasmic-facing. Positions A525–S713 constitute an STAS domain. Residues A720–A744 are disordered.

It belongs to the SLC26A/SulP transporter (TC 2.A.53) family. In terms of assembly, homodimer. Interacts (via STAS domain) with CALM; this interaction is calcium-dependent and the STAS domain interacts with only one lobe of CALM which is an elongated conformation. Interacts with MYH1. In terms of tissue distribution, specifically expressed in outer hair cells of cochleae (at protein level). Not detected in other cells of the organ of Corti.

Its subcellular location is the lateral cell membrane. The catalysed reaction is 2 hydrogencarbonate(in) + chloride(out) = 2 hydrogencarbonate(out) + chloride(in). With respect to regulation, salicylate, an inhibitor of outer hair cell motility, acts as a competitive antagonist at the prestin anion-binding site. Voltage-sensitive motor protein that drives outer hair cell (OHC) electromotility (eM) and participates in sound amplification in the hearing organ. Converts changes in the transmembrane electric potential into mechanical displacements resulting in the coupling of its expansion to movement of a charged voltage sensor across the lipid membrane. The nature of the voltage sensor is not completely clear, and two models compete. In the first model, acts as an incomplete transporter where intracellular chloride anion acts as extrinsic voltage sensor that drives conformational change in the protein which is sufficient to produce a length change in the plane of the membrane and hence in the length of the OHC. The second model in which multiple charged amino acid residues are distributed at the intracellular and extracellular membrane interfaces that form an intrinsic voltage sensor, whose movement produces the non-linear capacitance (NLC). However, the effective voltage sensor may be the result of a hybrid voltage sensor assembled from intrinsic charge (charged residues) and extrinsic charge (bound anion). Notably, binding of anions to the anion-binding pocket partially neutralizes the intrinsic positive charge rather than to form an electrically negative sensor, therefore remaining charge may serve as voltage sensor that, after depolarization, moves from down (expanded state) to up (contracted) conformation, which is accompanied by an eccentric contraction of the intermembrane cross-sectional area of the protein as well as a major increase in the hydrophobic thickness of the protein having as consequences the plasma membrane thickening and the cell contraction after membrane depolarization. The anion-binding pocket transits from the inward-open (Down) state, where it is exposed toward the intracellular solvent in the absence of anion, to the occluded (Up) state upon anion binding. Salicylate competes for the anion-binding site and inhibits the voltage-sensor movement, and therefore inhibits the charge transfer and electromotility by displacing Cl(-) from the anion-binding site and by preventing the structural transitions to the contracted state. In addition, can act as a weak Cl(-)/HCO3(-) antiporter across the cell membrane and so regulate the intracellular pH of the outer hair cells (OHCs), while firstly found as being unable to mediate electrogenic anion transport. Moreover, supports a role in cardiac mechanical amplification serving as an elastic element to enhance the actomyosin- based sarcomere contraction system. The sequence is that of Prestin from Rattus norvegicus (Rat).